We begin with the raw amino-acid sequence, 473 residues long: Ribulose bisphosphate carboxylase large chain 2 (473 aa).

The substrate site is built by Asn116 and Thr166. The Proton acceptor role is filled by Lys168. Position 170 (Lys170) interacts with substrate. 3 residues coordinate Mg(2+): Lys194, Asp196, and Glu197. Residue Lys194 is modified to N6-carboxylysine. His287 functions as the Proton acceptor in the catalytic mechanism. Substrate is bound by residues Arg288, His320, and Ser372.

The protein belongs to the RuBisCO large chain family. Type I subfamily. Heterohexadecamer of 8 large chains and 8 small chains. Mg(2+) serves as cofactor.

The enzyme catalyses 2 (2R)-3-phosphoglycerate + 2 H(+) = D-ribulose 1,5-bisphosphate + CO2 + H2O. It catalyses the reaction D-ribulose 1,5-bisphosphate + O2 = 2-phosphoglycolate + (2R)-3-phosphoglycerate + 2 H(+). Its function is as follows. RuBisCO catalyzes two reactions: the carboxylation of D-ribulose 1,5-bisphosphate, the primary event in carbon dioxide fixation, as well as the oxidative fragmentation of the pentose substrate. Both reactions occur simultaneously and in competition at the same active site. This is Ribulose bisphosphate carboxylase large chain 2 from Acidithiobacillus ferrooxidans (strain ATCC 23270 / DSM 14882 / CIP 104768 / NCIMB 8455) (Ferrobacillus ferrooxidans (strain ATCC 23270)).